A 386-amino-acid polypeptide reads, in one-letter code: Phosphomevalonate dehydratase large subunit (386 aa).

Residues glycine 48, valine 49, serine 50, asparagine 53, arginine 63, asparagine 79, and proline 80 each coordinate (R)-5-phosphomevalonate. Cysteine 110 provides a ligand contact to [4Fe-4S] cluster. Positions 129 and 130 each coordinate (R)-5-phosphomevalonate. Residues cysteine 283 and cysteine 342 each coordinate [4Fe-4S] cluster. Lysine 361 contributes to the (R)-5-phosphomevalonate binding site.

The protein belongs to the AcnX type II large subunit family. As to quaternary structure, heterodimer composed of a large subunit (PMDh-L) and a small subunit (PMDh-S). [4Fe-4S] cluster serves as cofactor.

It catalyses the reaction (R)-5-phosphomevalonate = (2E)-3-methyl-5-phosphooxypent-2-enoate + H2O. Its pathway is isoprenoid biosynthesis; isopentenyl diphosphate biosynthesis via mevalonate pathway. Its function is as follows. Component of a hydro-lyase that catalyzes the dehydration of mevalonate 5-phosphate (MVA5P) to form trans-anhydromevalonate 5-phosphate (tAHMP). Involved in the archaeal mevalonate (MVA) pathway, which provides fundamental precursors for isoprenoid biosynthesis, such as isopentenyl diphosphate (IPP) and dimethylallyl diphosphate (DMAPP). This is Phosphomevalonate dehydratase large subunit from Thermococcus kodakarensis (strain ATCC BAA-918 / JCM 12380 / KOD1) (Pyrococcus kodakaraensis (strain KOD1)).